Consider the following 507-residue polypeptide: Serine hydroxymethyltransferase (507 aa).

Lysine 283 carries the N6-(pyridoxal phosphate)lysine modification.

The protein belongs to the SHMT family. In terms of assembly, homotetramer. It depends on pyridoxal 5'-phosphate as a cofactor.

It carries out the reaction (6R)-5,10-methylene-5,6,7,8-tetrahydrofolate + glycine + H2O = (6S)-5,6,7,8-tetrahydrofolate + L-serine. It functions in the pathway one-carbon metabolism; tetrahydrofolate interconversion. Its function is as follows. Interconversion of serine and glycine. The sequence is that of Serine hydroxymethyltransferase (mel-32) from Caenorhabditis elegans.